Consider the following 198-residue polypeptide: dITP/XTP pyrophosphatase (198 aa).

A substrate-binding site is contributed by 9–14 (SNNAKK). Mg(2+) contacts are provided by Asp-41 and Asp-70. Catalysis depends on Asp-70, which acts as the Proton acceptor. Substrate-binding positions include Ser-71, 153–156 (FGYD), Lys-176, and 181–182 (HR).

Belongs to the HAM1 NTPase family. In terms of assembly, homodimer. Requires Mg(2+) as cofactor.

The catalysed reaction is XTP + H2O = XMP + diphosphate + H(+). It catalyses the reaction dITP + H2O = dIMP + diphosphate + H(+). The enzyme catalyses ITP + H2O = IMP + diphosphate + H(+). In terms of biological role, pyrophosphatase that catalyzes the hydrolysis of nucleoside triphosphates to their monophosphate derivatives, with a high preference for the non-canonical purine nucleotides XTP (xanthosine triphosphate), dITP (deoxyinosine triphosphate) and ITP. Seems to function as a house-cleaning enzyme that removes non-canonical purine nucleotides from the nucleotide pool, thus preventing their incorporation into DNA/RNA and avoiding chromosomal lesions. The protein is dITP/XTP pyrophosphatase of Aromatoleum aromaticum (strain DSM 19018 / LMG 30748 / EbN1) (Azoarcus sp. (strain EbN1)).